We begin with the raw amino-acid sequence, 112 residues long: Protein preY, mitochondrial (112 aa).

The transit peptide at 1–34 (MLSATCRRLAPALRRLRALSAVAGRFLQVPGARL) directs the protein to the mitochondrion. Residues 49–95 (HPALLQFLVCPLSKKPLRYEASTNELVNEELGIAYPIIDGIPNMIPQ) form the TRM112 domain.

The protein belongs to the PREY family. As to quaternary structure, interacts (via TRM112 domain) with NDUFAF5; the interaction is direct and stabilizes NDUFAF5 protein. Interacts with COQ5; the interaction is direct, stabilizes COQ5 protein and associates PYURF with COQ enzyme complex.

It localises to the mitochondrion. Its function is as follows. In mitochondria, S-adenosylmethionine-dependent methyltransferase chaperone that supports both coenzyme Q biosynthesis, by stabilizing its components, such as COQ5, and NADH:ubiquinone oxidoreductase complex (complex I, MT-ND1) assembly, by stabilizing complex I assembly factors, such as NDUFAF5. The sequence is that of Protein preY, mitochondrial (Pyurf) from Mus musculus (Mouse).